A 103-amino-acid chain; its full sequence is MYALIKTGGKQYKVAAGEKIKVEQIAADVGQEIVIDQVLAVGSGADLKVGTPLVAGATVKATVVAHGRHDKVRIFKMRRRKHYQKRQGHRQNFTELEISTVNG.

The protein belongs to the bacterial ribosomal protein bL21 family. In terms of assembly, part of the 50S ribosomal subunit. Contacts protein L20.

In terms of biological role, this protein binds to 23S rRNA in the presence of protein L20. The polypeptide is Large ribosomal subunit protein bL21 (Methylibium petroleiphilum (strain ATCC BAA-1232 / LMG 22953 / PM1)).